The sequence spans 362 residues: GDSL esterase/lipase At5g45670 (362 aa).

The first 23 residues, 1–23 (MARMSLMIMMIMVAVTMINIAKS), serve as a signal peptide directing secretion. Ser36 functions as the Nucleophile in the catalytic mechanism. Active-site residues include Asp326 and His329.

Belongs to the 'GDSL' lipolytic enzyme family.

Its subcellular location is the secreted. The polypeptide is GDSL esterase/lipase At5g45670 (Arabidopsis thaliana (Mouse-ear cress)).